The primary structure comprises 149 residues: 3-dehydroquinate dehydratase (149 aa).

The Proton acceptor role is filled by Y21. Residues N73, H79, and D86 each contribute to the substrate site. Residue H99 is the Proton donor of the active site. Residues 100-101 (LT) and R110 each bind substrate.

This sequence belongs to the type-II 3-dehydroquinase family. Homododecamer.

It carries out the reaction 3-dehydroquinate = 3-dehydroshikimate + H2O. Its pathway is metabolic intermediate biosynthesis; chorismate biosynthesis; chorismate from D-erythrose 4-phosphate and phosphoenolpyruvate: step 3/7. Catalyzes a trans-dehydration via an enolate intermediate. The protein is 3-dehydroquinate dehydratase of Thermus thermophilus (strain ATCC BAA-163 / DSM 7039 / HB27).